We begin with the raw amino-acid sequence, 226 residues long: uncharacterized protein (226 aa).

The HTH cro/C1-type domain maps to isoleucine 168–glutamine 226. Residues glutamine 179 to threonine 198 constitute a DNA-binding region (H-T-H motif).

This is an uncharacterized protein from Acanthamoeba polyphaga mimivirus (APMV).